The following is a 411-amino-acid chain: MTAQTPIHVYSEIGKLKKVLLHRPGKEIENLMPDYLERLLFDDIPFLEDAQKEHDAFAQALRDEGVEVLYLETLAAESLVTPEIREAFIDEYLSEANIRGRATKKAIRELLMSIEDNQELIEKTMAGVQKSELPEIPAAEKGLTDLVESSYPFAIDPMPNLYFTRDPFATIGTGVSLNHMFSETRNRETIYGKYIFTHHPIYGGGKVPMVYDRNETTRIEGGDELVLSKDVLAVGISQRTDAASIEKLLVNIFKQNLGFKKVLAFEFANNRKFMHLDTVFTMVDYDKFTIHPEIEGDLRVYSVTYENEELRIVEETGDLAELLAANLGVERVELIRCGGDNLVAAGREQWNDGSNTLTIAPGVVVVYNRNTITNAILESKGLKLIKIHGSELVRGRGGPRCMSMPFEREDI.

Catalysis depends on Cys401, which acts as the Amidino-cysteine intermediate.

Belongs to the arginine deiminase family.

The protein resides in the cytoplasm. It catalyses the reaction L-arginine + H2O = L-citrulline + NH4(+). It participates in amino-acid degradation; L-arginine degradation via ADI pathway; carbamoyl phosphate from L-arginine: step 1/2. This chain is Arginine deiminase, found in Streptococcus equi subsp. equi (strain 4047).